A 188-amino-acid polypeptide reads, in one-letter code: Elongation factor P (188 aa).

It belongs to the elongation factor P family.

It localises to the cytoplasm. It participates in protein biosynthesis; polypeptide chain elongation. Its function is as follows. Involved in peptide bond synthesis. Stimulates efficient translation and peptide-bond synthesis on native or reconstituted 70S ribosomes in vitro. Probably functions indirectly by altering the affinity of the ribosome for aminoacyl-tRNA, thus increasing their reactivity as acceptors for peptidyl transferase. The protein is Elongation factor P of Parabacteroides distasonis (strain ATCC 8503 / DSM 20701 / CIP 104284 / JCM 5825 / NCTC 11152).